A 306-amino-acid chain; its full sequence is MTDSTPEAGAEGEFTPVKPQESELLVVTGMSGAGRSTAANALEDHGWYVVENLPPQMLTTLADLVARTPNSLPKLAVVVDVRGKAFFADIRDSLNTLAASGISYRVLFLDASDNTLVRRFEQGRRPHPLQGDGRMLDGIAAEREILALLRDSADVVVDTTSLNVHELANQVTGLFSDSGPVVLRLTVMSFGFKYGLPVDANYVADVRFLPNPHWVPALRPHTGLDQDVSDFVLIENDANEFVTRYVRALGPVLEGYRRENKHYATIAVGCTGGKHRSVAVSVELAKRLAQLPRVTVSTKHRDLGRE.

Position 29-36 (29-36) interacts with ATP; sequence GMSGAGRS. 80–83 is a binding site for GTP; sequence DVRG.

It belongs to the RapZ-like family.

Its function is as follows. Displays ATPase and GTPase activities. This chain is Nucleotide-binding protein RSal33209_2275, found in Renibacterium salmoninarum (strain ATCC 33209 / DSM 20767 / JCM 11484 / NBRC 15589 / NCIMB 2235).